The chain runs to 98 residues: Plastocyanin (98 aa).

The 98-residue stretch at 1–98 (AQIVKLGGDD…AGMKMTITVQ (98 aa)) folds into the Plastocyanin-like domain. Residues His38, Cys83, His86, and Met91 each coordinate Cu cation.

It belongs to the plastocyanin family. Cu(2+) serves as cofactor.

The protein resides in the plastid. Its subcellular location is the chloroplast thylakoid membrane. Functionally, participates in electron transfer between P700 and the cytochrome b6-f complex in photosystem I. This Ulva arasakii (Sea lettuce) protein is Plastocyanin (PETE).